The primary structure comprises 503 residues: Zinc metalloproteinase nas-14 (503 aa).

The first 25 residues, 1 to 25, serve as a signal peptide directing secretion; it reads MRLLYSLFHCSAFLVGFTLSVGVLP. The region spanning 116–312 is the Peptidase M12A domain; it reads NLVTYPDKLW…KKVNKLYQCG (197 aa). 2 disulfide bridges follow: cysteine 158/cysteine 311 and cysteine 182/cysteine 202. A glycan (N-linked (GlcNAc...) asparagine) is linked at asparagine 192. Histidine 210 lines the Zn(2+) pocket. Glutamate 211 is an active-site residue. Positions 214 and 220 each coordinate Zn(2+). Residues 317–340 show a composition bias toward low complexity; sequence TSSTTTTTTTTTTTTTTEEPTTTT. Positions 317–377 are disordered; the sequence is TSSTTTTTTT…TPKPVERSRN (61 aa). A compositionally biased stretch (basic and acidic residues) spans 342-351; the sequence is VEEKPKDKKV. The span at 352–370 shows a compositional bias: low complexity; it reads SSTTTTTKKPTTTTTTTPK. Intrachain disulfides connect cysteine 380-cysteine 414, cysteine 387-cysteine 407, and cysteine 396-cysteine 411. One can recognise a ShKT 1 domain in the interval 380–414; it reads CEDLNAHCGMWEQLGHCQHSVKYMAHYCRKACNLC. The interval 422–464 is disordered; it reads TTTTPKPVPRNKEKENKSASSTTRGTSTATSTTPKTTTTTTSA. Asparagine 437 is a glycosylation site (N-linked (GlcNAc...) asparagine). The span at 439 to 464 shows a compositional bias: low complexity; sequence SASSTTRGTSTATSTTPKTTTTTTSA. Intrachain disulfides connect cysteine 469-cysteine 503, cysteine 476-cysteine 496, and cysteine 485-cysteine 500. One can recognise a ShKT 2 domain in the interval 469–503; that stretch reads CEDKNLFCSYWAKIGECNSESKFMKIFCKASCGKC.

Zn(2+) is required as a cofactor. As to expression, expressed in pharyngeal muscles and mc cells.

The protein localises to the secreted. In terms of biological role, metalloprotease. The sequence is that of Zinc metalloproteinase nas-14 (nas-14) from Caenorhabditis elegans.